The sequence spans 507 residues: Peroxisomal membrane protein PEX14 (507 aa).

2 stretches are compositionally biased toward polar residues: residues 1–10 (MATHQQTQPP) and 32–48 (EVQQ…SVFK). Residues 1–52 (MATHQQTQPPSDFPALADENSQIPEATKPANEVQQATIAQDPPTSVFKNSEP) are disordered. The Peroxisomal portion of the chain corresponds to 1–152 (MATHQQTQPP…QAAFLSRFRW (152 aa)). Involved in interaction with PEX5 regions lie at residues 58–65 (IQNAIKFL) and 78–97 (RRSF…EAFR). Residues 153–173 (YHAILAVGVLAASGAGTAVFI) form a helical membrane-spanning segment. Residues 174-507 (KRSLIPRFKS…EQQHISQEGN (334 aa)) are Cytoplasmic-facing. Over residues 288-302 (VTTARKPYTNGSNVD) the composition is skewed to polar residues. 4 disordered regions span residues 288–329 (VTTA…PKSY), 344–394 (NIRE…NPRS), 409–435 (ANQN…QPPP), and 448–507 (PKPQ…QEGN). Low complexity predominate over residues 308-322 (ARSASPPAAPADSSA). Over residues 378 to 394 (QDESSNGQWWQQKNPRS) the composition is skewed to polar residues.

It belongs to the peroxin-14 family. In terms of assembly, interacts with PEX13; forming the PEX13-PEX14 docking complex. Interacts with PEX5 (via WxxxF/Y motifs). Expressed in flowers, siliques, leaves and roots.

It localises to the peroxisome membrane. In terms of biological role, component of the PEX13-PEX14 docking complex, a translocon channel that specifically mediates the import of peroxisomal cargo proteins bound to PEX5 receptor. The PEX13-PEX14 docking complex forms a large import pore which can be opened to a diameter of about 9 nm. Mechanistically, PEX5 receptor along with cargo proteins associates with the PEX14 subunit of the PEX13-PEX14 docking complex in the cytosol, leading to the insertion of the receptor into the organelle membrane with the concomitant translocation of the cargo into the peroxisome matrix. The protein is Peroxisomal membrane protein PEX14 of Arabidopsis thaliana (Mouse-ear cress).